The following is a 211-amino-acid chain: ATP-dependent Clp protease proteolytic subunit (211 aa).

The Nucleophile role is filled by S114. The active site involves H139.

This sequence belongs to the peptidase S14 family. As to quaternary structure, fourteen ClpP subunits assemble into 2 heptameric rings which stack back to back to give a disk-like structure with a central cavity, resembling the structure of eukaryotic proteasomes.

It localises to the cytoplasm. The enzyme catalyses Hydrolysis of proteins to small peptides in the presence of ATP and magnesium. alpha-casein is the usual test substrate. In the absence of ATP, only oligopeptides shorter than five residues are hydrolyzed (such as succinyl-Leu-Tyr-|-NHMec, and Leu-Tyr-Leu-|-Tyr-Trp, in which cleavage of the -Tyr-|-Leu- and -Tyr-|-Trp bonds also occurs).. Its function is as follows. Cleaves peptides in various proteins in a process that requires ATP hydrolysis. Has a chymotrypsin-like activity. Plays a major role in the degradation of misfolded proteins. This is ATP-dependent Clp protease proteolytic subunit from Pseudomonas fluorescens (strain ATCC BAA-477 / NRRL B-23932 / Pf-5).